The primary structure comprises 771 residues: Semaphorin-3A (771 aa).

The signal sequence occupies residues 1 to 20 (MGWLTRIVCLFWGVLLTARA). Residues 31 to 514 (RLKLSYKEML…STAGVAQLPL (484 aa)) enclose the Sema domain. Asn-53 carries an N-linked (GlcNAc...) asparagine glycan. A disulfide bridge connects residues Cys-103 and Cys-114. Asn-125 carries an N-linked (GlcNAc...) asparagine glycan. Cystine bridges form between Cys-132/Cys-141, Cys-269/Cys-381, Cys-293/Cys-341, and Cys-517/Cys-535. Residues 580-664 (PEERIIYGVE…GFIQTLLKVT (85 aa)) enclose the Ig-like C2-type domain. N-linked (GlcNAc...) asparagine glycosylation occurs at Asn-590. A disulfide bridge links Cys-649 with Cys-722. Positions 728 to 737 (RDRKQRRQRP) are enriched in basic residues. The interval 728-771 (RDRKQRRQRPGHTPGNSNKWKHLQENKKGRNRRTHEFERAPRSV) is disordered. Residues 749–771 (HLQENKKGRNRRTHEFERAPRSV) are compositionally biased toward basic and acidic residues.

This sequence belongs to the semaphorin family. Interacts with PLXND1. Expressed in the dorsal root ganglia.

The protein localises to the secreted. Its function is as follows. Involved in the development of the olfactory system and in neuronal control of puberty. Induces the collapse and paralysis of neuronal growth cones. Could serve as a ligand that guides specific growth cones by a motility-inhibiting mechanism. Binds to the complex neuropilin-1/plexin-1. The chain is Semaphorin-3A (SEMA3A) from Homo sapiens (Human).